A 46-amino-acid chain; its full sequence is Phospholipase A2 superbin c (46 aa).

Tyrosine 28, glycine 30, and glycine 32 together coordinate Ca(2+). An intrachain disulfide couples cysteine 29 to cysteine 45.

Ca(2+) is required as a cofactor. In terms of tissue distribution, expressed by the venom gland.

The protein localises to the secreted. It catalyses the reaction a 1,2-diacyl-sn-glycero-3-phosphocholine + H2O = a 1-acyl-sn-glycero-3-phosphocholine + a fatty acid + H(+). Functionally, snake venom phospholipase A2 (PLA2) that inhibits collagen-induced platelet aggregation. In terms of inhibition of platelet aggregation, superbin c is more potent as superbin d. PLA2 catalyzes the calcium-dependent hydrolysis of the 2-acyl groups in 3-sn-phosphoglycerides. The chain is Phospholipase A2 superbin c from Austrelaps superbus (Lowland copperhead snake).